The chain runs to 345 residues: Selenide, water dikinase (345 aa).

The active site involves Cys16. ATP is bound by residues Lys19 and 46 to 48; that span reads TSD. Asp49 contributes to the Mg(2+) binding site. Residues Asp66, Asp89, and 136-138 contribute to the ATP site; that span reads GHT. Asp89 contributes to the Mg(2+) binding site. Asp224 contacts Mg(2+).

It belongs to the selenophosphate synthase 1 family. Class I subfamily. In terms of assembly, homodimer. Mg(2+) serves as cofactor.

It catalyses the reaction hydrogenselenide + ATP + H2O = selenophosphate + AMP + phosphate + 2 H(+). Synthesizes selenophosphate from selenide and ATP. In Clostridium botulinum (strain Eklund 17B / Type B), this protein is Selenide, water dikinase.